The primary structure comprises 403 residues: Poly(rC)-binding protein 4 (403 aa).

3 consecutive KH domains span residues 17–67 (TLTL…TITG), 101–154 (PVTL…TVSG), and 241–293 (TSSQ…TITG).

In terms of tissue distribution, widely expressed, with highest levels in testis and lowest in heart.

The protein localises to the cytoplasm. In terms of biological role, single-stranded nucleic acid binding protein that binds preferentially to oligo dC. The chain is Poly(rC)-binding protein 4 (Pcbp4) from Mus musculus (Mouse).